A 295-amino-acid polypeptide reads, in one-letter code: Indole-3-glycerol phosphate synthase (295 aa).

It belongs to the TrpC family.

The enzyme catalyses 1-(2-carboxyphenylamino)-1-deoxy-D-ribulose 5-phosphate + H(+) = (1S,2R)-1-C-(indol-3-yl)glycerol 3-phosphate + CO2 + H2O. It functions in the pathway amino-acid biosynthesis; L-tryptophan biosynthesis; L-tryptophan from chorismate: step 4/5. The protein is Indole-3-glycerol phosphate synthase of Prochlorococcus marinus (strain NATL2A).